The sequence spans 298 residues: Anamorsin homolog (298 aa).

An N-terminal SAM-like domain region spans residues 1-143; it reads MTQLIITHQS…IKAEKPSWKP (143 aa). A linker region spans residues 143 to 162; the sequence is PEEGKVLVDDIDLEGSVPDI. Residues cysteine 175, cysteine 182, cysteine 185, and cysteine 187 each contribute to the [2Fe-2S] cluster site. Residues 175-187 are fe-S binding site A; it reads CKSKERACNNCNC. Positions 218, 221, 229, and 232 each coordinate [4Fe-4S] cluster. 2 short sequence motifs (cx2C motif) span residues 218-221 and 229-232; these read CGNC and CSGC. The tract at residues 218 to 232 is fe-S binding site B; the sequence is CGNCYLGDAFRCSGC.

Belongs to the anamorsin family. In terms of assembly, monomer. It depends on [2Fe-2S] cluster as a cofactor. [4Fe-4S] cluster is required as a cofactor.

Its subcellular location is the cytoplasm. The protein resides in the mitochondrion intermembrane space. In terms of biological role, component of the cytosolic iron-sulfur (Fe-S) protein assembly (CIA) machinery. Required for the maturation of extramitochondrial Fe-S proteins. Part of an electron transfer chain functioning in an early step of cytosolic Fe-S biogenesis, facilitating the de novo assembly of a [4Fe-4S] cluster on the cytosolic Fe-S scaffold complex. Electrons are transferred from NADPH via a FAD- and FMN-containing diflavin oxidoreductase. Together with the diflavin oxidoreductase, also required for the assembly of the diferric tyrosyl radical cofactor of ribonucleotide reductase (RNR), probably by providing electrons for reduction during radical cofactor maturation in the catalytic small subunit. This Cryptosporidium parvum (strain Iowa II) protein is Anamorsin homolog.